Here is a 72-residue protein sequence, read N- to C-terminus: UPF0352 protein SO_2176 (72 aa).

It belongs to the UPF0352 family.

This Shewanella oneidensis (strain ATCC 700550 / JCM 31522 / CIP 106686 / LMG 19005 / NCIMB 14063 / MR-1) protein is UPF0352 protein SO_2176.